Here is a 193-residue protein sequence, read N- to C-terminus: Ion-translocating oxidoreductase complex subunit A (193 aa).

The next 6 helical transmembrane spans lie at 5-25, 47-67, 72-92, 102-122, 134-154, and 171-191; these read LLLFVGTVLVNNFVLVKFLGL, FVMTLASVSAWVINTFILVPL, LRTLSFILVIAVVVQFTEMVV, LLGIFLPLITTNCAVLGVALL, AVYGFSAAAGFSLVMVLFAAI, and SIALITAGLMSLAFMGFTGLV.

The protein belongs to the NqrDE/RnfAE family. In terms of assembly, the complex is composed of six subunits: RnfA, RnfB, RnfC, RnfD, RnfE and RnfG.

The protein localises to the cell inner membrane. Its function is as follows. Part of a membrane-bound complex that couples electron transfer with translocation of ions across the membrane. The protein is Ion-translocating oxidoreductase complex subunit A of Serratia proteamaculans (strain 568).